The sequence spans 182 residues: Bifunctional dihydrofolate reductase-thymidylate synthase (182 aa).

One can recognise a DHFR domain in the interval 1 to 182 (AICACCKVLN…YFTRINNAYT (182 aa)). 25–31 (GLGNAGG) contacts NADP(+). Asp-40 is a binding site for substrate. NADP(+) contacts are provided by residues 93 to 95 (KTS) and 114 to 117 (LSRT). The substrate site is built by Ile-154, Tyr-160, and Thr-175. An NADP(+)-binding site is contributed by 155-162 (GGASVYKE).

This sequence in the N-terminal section; belongs to the dihydrofolate reductase family. The protein in the C-terminal section; belongs to the thymidylate synthase family. In terms of assembly, homodimer.

It carries out the reaction (6S)-5,6,7,8-tetrahydrofolate + NADP(+) = 7,8-dihydrofolate + NADPH + H(+). The catalysed reaction is dUMP + (6R)-5,10-methylene-5,6,7,8-tetrahydrofolate = 7,8-dihydrofolate + dTMP. It participates in cofactor biosynthesis; tetrahydrofolate biosynthesis; 5,6,7,8-tetrahydrofolate from 7,8-dihydrofolate: step 1/1. In terms of biological role, bifunctional enzyme. Involved in de novo dTMP biosynthesis. Key enzyme in folate metabolism. Catalyzes an essential reaction for de novo glycine and purine synthesis, DNA precursor synthesis, and for the conversion of dUMP to dTMP. The polypeptide is Bifunctional dihydrofolate reductase-thymidylate synthase (Plasmodium vinckei).